The following is a 291-amino-acid chain: Beta-lactamase CTX-M-1 (291 aa).

A signal peptide spans 1-28 (MVKKSLRQFTLMATATVTLLLGSVPLYA). The active-site Nucleophile; acyl-ester intermediate is the Ser-73. Residues Lys-76, Ser-133, Glu-169, and Ser-240 each coordinate a beta-lactam. Glu-169 functions as the Proton acceptor in the catalytic mechanism.

Belongs to the class-A beta-lactamase family. In terms of assembly, monomer.

The protein resides in the secreted. The catalysed reaction is a beta-lactam + H2O = a substituted beta-amino acid. Inhibited by the beta-lactamase-blocking agent clavulanic acid; in the TG1 strain. Its function is as follows. Extended-spectrum beta-lactamase (ESBL) which confers resistance to penicillins, as well as first, second and third-generation cephalosporins. Has cefotaxime-hydrolyzing activity. Inactive against the cephamycin antibiotic, cefoxitin, or against the carbapenem, imipenem. This Escherichia coli protein is Beta-lactamase CTX-M-1.